Consider the following 90-residue polypeptide: YcgL domain-containing protein plu2139 (90 aa).

A YcgL domain is found at 1 to 85 (MICAIYSSPK…PVENLMNAHL (85 aa)).

In Photorhabdus laumondii subsp. laumondii (strain DSM 15139 / CIP 105565 / TT01) (Photorhabdus luminescens subsp. laumondii), this protein is YcgL domain-containing protein plu2139.